A 405-amino-acid chain; its full sequence is Probable tRNA sulfurtransferase (405 aa).

A THUMP domain is found at 60 to 165 (VPVAESLKQI…EEAAYLSYEN (106 aa)). ATP is bound by residues 183 to 184 (ML), 208 to 209 (HF), arginine 265, glycine 287, and glutamine 296.

It belongs to the ThiI family.

Its subcellular location is the cytoplasm. The enzyme catalyses [ThiI sulfur-carrier protein]-S-sulfanyl-L-cysteine + a uridine in tRNA + 2 reduced [2Fe-2S]-[ferredoxin] + ATP + H(+) = [ThiI sulfur-carrier protein]-L-cysteine + a 4-thiouridine in tRNA + 2 oxidized [2Fe-2S]-[ferredoxin] + AMP + diphosphate. It catalyses the reaction [ThiS sulfur-carrier protein]-C-terminal Gly-Gly-AMP + S-sulfanyl-L-cysteinyl-[cysteine desulfurase] + AH2 = [ThiS sulfur-carrier protein]-C-terminal-Gly-aminoethanethioate + L-cysteinyl-[cysteine desulfurase] + A + AMP + 2 H(+). It functions in the pathway cofactor biosynthesis; thiamine diphosphate biosynthesis. Functionally, catalyzes the ATP-dependent transfer of a sulfur to tRNA to produce 4-thiouridine in position 8 of tRNAs, which functions as a near-UV photosensor. Also catalyzes the transfer of sulfur to the sulfur carrier protein ThiS, forming ThiS-thiocarboxylate. This is a step in the synthesis of thiazole, in the thiamine biosynthesis pathway. The sulfur is donated as persulfide by IscS. The polypeptide is Probable tRNA sulfurtransferase (Streptococcus mutans serotype c (strain ATCC 700610 / UA159)).